The sequence spans 668 residues: DNA ligase (668 aa).

Residues 31–35 (DYDFD), 80–81 (SL), and E111 each bind NAD(+). Catalysis depends on K113, which acts as the N6-AMP-lysine intermediate. NAD(+) contacts are provided by R134, E170, K285, and K309. Zn(2+)-binding residues include C403, C406, C421, and C427. A BRCT domain is found at 587-668 (NATEKFIGKT…EFITKLNESE (82 aa)).

This sequence belongs to the NAD-dependent DNA ligase family. LigA subfamily. It depends on Mg(2+) as a cofactor. Requires Mn(2+) as cofactor.

It carries out the reaction NAD(+) + (deoxyribonucleotide)n-3'-hydroxyl + 5'-phospho-(deoxyribonucleotide)m = (deoxyribonucleotide)n+m + AMP + beta-nicotinamide D-nucleotide.. DNA ligase that catalyzes the formation of phosphodiester linkages between 5'-phosphoryl and 3'-hydroxyl groups in double-stranded DNA using NAD as a coenzyme and as the energy source for the reaction. It is essential for DNA replication and repair of damaged DNA. This chain is DNA ligase, found in Flavobacterium johnsoniae (strain ATCC 17061 / DSM 2064 / JCM 8514 / BCRC 14874 / CCUG 350202 / NBRC 14942 / NCIMB 11054 / UW101) (Cytophaga johnsonae).